Reading from the N-terminus, the 315-residue chain is Biotin synthase (315 aa).

The Radical SAM core domain maps to 39–266 (NSLQFATLLS…KSAIRLTAGR (228 aa)). [4Fe-4S] cluster is bound by residues Cys-54, Cys-58, and Cys-61. [2Fe-2S] cluster contacts are provided by Cys-98, Cys-129, Cys-189, and Arg-261.

Belongs to the radical SAM superfamily. Biotin synthase family. As to quaternary structure, homodimer. The cofactor is [4Fe-4S] cluster. [2Fe-2S] cluster serves as cofactor.

The enzyme catalyses (4R,5S)-dethiobiotin + (sulfur carrier)-SH + 2 reduced [2Fe-2S]-[ferredoxin] + 2 S-adenosyl-L-methionine = (sulfur carrier)-H + biotin + 2 5'-deoxyadenosine + 2 L-methionine + 2 oxidized [2Fe-2S]-[ferredoxin]. The protein operates within cofactor biosynthesis; biotin biosynthesis; biotin from 7,8-diaminononanoate: step 2/2. Its function is as follows. Catalyzes the conversion of dethiobiotin (DTB) to biotin by the insertion of a sulfur atom into dethiobiotin via a radical-based mechanism. In Legionella pneumophila (strain Lens), this protein is Biotin synthase.